A 612-amino-acid polypeptide reads, in one-letter code: Heparan-sulfate 6-O-sulfotransferase 2 (612 aa).

Residues 1-4 lie on the Cytoplasmic side of the membrane; it reads MALP. Residues 5-27 form a helical; Signal-anchor for type II membrane protein membrane-spanning segment; sequence AFAARALGPPLQPEQGAPARTTC. The interval 9–52 is disordered; the sequence is RALGPPLQPEQGAPARTTCPRRHSRVEAELAASRPGSVAASVRA. The Lumenal portion of the chain corresponds to 28-612; that stretch reads PRRHSRVEAE…DYIGSVETWR (585 aa). N-linked (GlcNAc...) asparagine glycosylation is present at Asn-209. 233–241 contributes to the 3'-phosphoadenylyl sulfate binding site; it reads HIQKTGGTT. Residues 263–264, Arg-280, Trp-285, and His-290 contribute to the substrate site; that span reads KK. His-290 serves as the catalytic Proton acceptor. 3'-phosphoadenylyl sulfate is bound by residues Arg-325 and Ser-333. Substrate-binding residues include His-337 and Trp-344. Residue Asn-404 is glycosylated (N-linked (GlcNAc...) asparagine). 457 to 459 contacts 3'-phosphoadenylyl sulfate; the sequence is TQY. Residue Asn-460 is glycosylated (N-linked (GlcNAc...) asparagine). A 3'-phosphoadenylyl sulfate-binding site is contributed by 463-464; sequence RA. The disordered stretch occupies residues 529–612; that stretch reads HFQSQSQGQS…DYIGSVETWR (84 aa). A compositionally biased stretch (low complexity) spans 531 to 564; sequence QSQSQGQSQSQSPGQNLSQNPNPNPNQNLTQNLS. Residues Asn-546, Asn-558, Asn-562, Asn-574, and Asn-599 are each glycosylated (N-linked (GlcNAc...) asparagine). Over residues 565 to 577 the composition is skewed to polar residues; it reads HNLTPSSNPNSTQ.

The protein belongs to the sulfotransferase 6 family.

The protein resides in the membrane. The catalysed reaction is alpha-D-glucosaminyl-[heparan sulfate](n) + 3'-phosphoadenylyl sulfate = 6-sulfo-alpha-D-glucosaminyl-[heparan sulfate](n) + adenosine 3',5'-bisphosphate + H(+). 6-O-sulfation enzyme which catalyzes the transfer of sulfate from 3'-phosphoadenosine 5'-phosphosulfate (PAPS) to position 6 of the N-sulfoglucosamine residue (GlcNS) of heparan sulfate. This Mus musculus (Mouse) protein is Heparan-sulfate 6-O-sulfotransferase 2 (Hs6st2).